The primary structure comprises 68 residues: Neuronal regeneration-related protein (68 aa).

The interval 21–54 (MEGRLPKGRLPVPKEVNRKKNDETNAASLTPLGS) is disordered. Residues 44–54 (TNAASLTPLGS) show a composition bias toward polar residues.

As to quaternary structure, interacts with the latency-associated peptides (LAP) of TGFB1 and TGFB2; the interaction results in a decrease in TGFB autoinduction. Interacts with FLNA. Phosphorylated on Ser-59. Phosphorylation decreases stability and activity.

The protein localises to the cytoplasm. Its function is as follows. May have roles in neural function and cellular differentiation. Ectopic expression promotes axonal regeneration, induces differentiation of fibroblast into myofibroblast, induces myofibroblast ameboid migration, augments motility of gliomas, and increases retinoic-acid regulation of lipid-droplet biogenesis. Down-regulates the expression of TGFB1 and TGFB2 but not of TGFB3. May play a role in the regulation of alveolar generation. This Pongo abelii (Sumatran orangutan) protein is Neuronal regeneration-related protein (NREP).